The chain runs to 875 residues: MKETKVQNTIAGAKGITFSGDTFVVPETHDMVKTLFDPMVRKSYCEMIILLILAANGLVFWLINNNTLRIETFIGLYIFWRLSYNFGIGYLLNVQSNHHRLVKWARKAQVFKKNGSLVSRLAEKEIKSQMGPEYDVQKYPIEFNTWLLFRKVVDLILMSDFTTFICLVVVCAINKDYQFINSDQQEVWLISTRLILGTVLILFNLWVKVNAHNTIKDYAWYWGDFFFRQINNEDLIFDGVFEMVPHPMYSVGYVGYYGFAIISKSYTILTVAIFGHFLQMIFLHYIENPHIDKIYGPSGNEADIEMLLKLKDLRHFDNIKPLVGLLNFTWLRASDMTNLIMVGTYSFTIPYLASLVDTVRVGETGVNPGTILFILTIVIKVFESLSINILLILQSYYKTFTKWYLSNDISVEKTLNNWSIMYNSLISLTYSSFFGLNFYHVLIGLESDKLFINSWVYLRIFLGILLVFTQVWINSSIIDSIGYFGWFYGDFFIPKTSQQKAHLTKAGVYRYLNNPEQIFGVCGIMGVTLIIPSLENLICCVLWVTNNFIRINFIEKAHMIKIYGEREVMKDSGVTKTFKKHLIPGAIQRRLSKGSEDNSDLLNQHRRKSTIMAGATDSLDNFIKELKNTNTRLTKQNILELSQNLYFENSDYKLVIKNLNTTENNLSTAFIGEPIEVEWKAPENHSPKDWIGLYKTVQTTYSRYKTLISSSDRWTQVTSDSGSYVFEGEKLFWEEGIYEFRYHLDGKHDVAYISEPFELTSANIEVPPSTEGSIVLANELKAKVFDRAIVGFGSIDSPIDSAVQKSGSIIQTYNRLAYVISKSTGIHINAKVFLYADNEDELTVHKLSLKLINIRKVLDDLSHAHYPLSEEKKEE.

At 1-42 (MKETKVQNTIAGAKGITFSGDTFVVPETHDMVKTLFDPMVRK) the chain is on the lumenal side. The chain crosses the membrane as a helical span at residues 43-63 (SYCEMIILLILAANGLVFWLI). At 64 to 71 (NNNTLRIE) the chain is on the cytoplasmic side. Residues 72–92 (TFIGLYIFWRLSYNFGIGYLL) form a helical membrane-spanning segment. Residues 93–152 (NVQSNHHRLVKWARKAQVFKKNGSLVSRLAEKEIKSQMGPEYDVQKYPIEFNTWLLFRKV) lie on the Lumenal side of the membrane. The chain crosses the membrane as a helical span at residues 153–173 (VDLILMSDFTTFICLVVVCAI). Topologically, residues 174–186 (NKDYQFINSDQQE) are cytoplasmic. A helical membrane pass occupies residues 187–207 (VWLISTRLILGTVLILFNLWV). Residues 208-242 (KVNAHNTIKDYAWYWGDFFFRQINNEDLIFDGVFE) are Lumenal-facing. A helical transmembrane segment spans residues 243-263 (MVPHPMYSVGYVGYYGFAIIS). The Cytoplasmic portion of the chain corresponds to 264-265 (KS). Residues 266–286 (YTILTVAIFGHFLQMIFLHYI) traverse the membrane as a helical segment. The Lumenal segment spans residues 287-338 (ENPHIDKIYGPSGNEADIEMLLKLKDLRHFDNIKPLVGLLNFTWLRASDMTN). The helical transmembrane segment at 339–359 (LIMVGTYSFTIPYLASLVDTV) threads the bilayer. Over 360–370 (RVGETGVNPGT) the chain is Cytoplasmic. A helical transmembrane segment spans residues 371 to 391 (ILFILTIVIKVFESLSINILL). Over 392 to 424 (ILQSYYKTFTKWYLSNDISVEKTLNNWSIMYNS) the chain is Lumenal. A helical membrane pass occupies residues 425 to 445 (LISLTYSSFFGLNFYHVLIGL). Topologically, residues 446–459 (ESDKLFINSWVYLR) are cytoplasmic. A helical transmembrane segment spans residues 460–480 (IFLGILLVFTQVWINSSIIDS). Over 481-517 (IGYFGWFYGDFFIPKTSQQKAHLTKAGVYRYLNNPEQ) the chain is Lumenal. A helical transmembrane segment spans residues 518–538 (IFGVCGIMGVTLIIPSLENLI). The Cytoplasmic segment spans residues 539-875 (CCVLWVTNNF…YPLSEEKKEE (337 aa)).

Belongs to the class VI-like SAM-binding methyltransferase superfamily. CHO2 family.

It localises to the endoplasmic reticulum membrane. It carries out the reaction a 1,2-diacyl-sn-glycero-3-phosphoethanolamine + S-adenosyl-L-methionine = a 1,2-diacyl-sn-glycero-3-phospho-N-methylethanolamine + S-adenosyl-L-homocysteine + H(+). It participates in phospholipid metabolism; phosphatidylcholine biosynthesis. Its function is as follows. Catalyzes the first step of the methylation pathway of phosphatidylcholine biosynthesis, the SAM-dependent methylation of phosphatidylethanolamine (PE) to phosphatidylmonomethylethanolamine (PMME). The polypeptide is Phosphatidylethanolamine N-methyltransferase (CHO2) (Debaryomyces hansenii (strain ATCC 36239 / CBS 767 / BCRC 21394 / JCM 1990 / NBRC 0083 / IGC 2968) (Yeast)).